Consider the following 632-residue polypeptide: tRNA uridine 5-carboxymethylaminomethyl modification enzyme MnmG (632 aa).

13–18 (GGGHAG) serves as a coordination point for FAD. 273–287 (GPRYCPSIEDKIHRF) is an NAD(+) binding site.

The protein belongs to the MnmG family. In terms of assembly, homodimer. Heterotetramer of two MnmE and two MnmG subunits. FAD is required as a cofactor.

It is found in the cytoplasm. NAD-binding protein involved in the addition of a carboxymethylaminomethyl (cmnm) group at the wobble position (U34) of certain tRNAs, forming tRNA-cmnm(5)s(2)U34. The protein is tRNA uridine 5-carboxymethylaminomethyl modification enzyme MnmG of Psychrobacter arcticus (strain DSM 17307 / VKM B-2377 / 273-4).